An 843-amino-acid chain; its full sequence is MTLDMDAVLSDFVRSTGAEPGLARDLLEGKNWDVNAALSDFEQLRQVHAGNLPPSFSEGSGGSRTPEKGFSDREPTRPPRPILQRQDDIVQEKRLSRGISHASSSIVSLARSHVSSNGGGGGSNEHPLEMPICAFQLPDLTVYNEDFRSFIERDLIEQSMLVALEQAGRLNWWVSVDPTSQRLLPLATTGDGNCLLHAASLGMWGFHDRDLMLRKALYALMEKGVEKEALKRRWRWQQTQQNKESGLVYTEDEWQKEWNELIKLASSEPRMHLGTNGANCGGVESSEEPVYESLEEFHVFVLAHVLRRPIVVVADTMLRDSGGEAFAPIPFGGIYLPLEVPASQCHRSPLVLAYDQAHFSALVSMEQKENTKEQAVIPLTDSEYKLLPLHFAVDPGKGWEWGKDDSDNVRLASVILSLEVKLHLLHSYMNVKWIPLSSDAQAPLAQPESPTASAGDEPRSTPESGDSDKESVGSSSTSNEGGRRKEKSKRDREKDKKRADSVANKLGSFGKTLGSKLKKNMGGLMHSKGSKPGGVGTGLGGSSGTETLEKKKKNSLKSWKGGKEEAAGDGPVSEKPPAESVGNGGSKYSQEVMQSLSILRTAMQGEGKFIFVGTLKMGHRHQYQEEMIQRYLSDAEERFLAEQKQKEAERKIMNGGIGGGPPPAKKPEPDAREEQPTGPPAESRAMAFSTGYPGDFTIPRPSGGGVHCQEPRRQLAGGPCVGGLPPYATFPRQCPPGRPYPHQDSIPSLEPGSHSKDGLHRGALLPPPYRVADSYSNGYREPPEPDGWAGGLRGLPPTQTKCKQPNCSFYGHPETNNFCSCCYREELRRREREPDGELLVHRF.

Residues 50-88 are disordered; the sequence is GNLPPSFSEGSGGSRTPEKGFSDREPTRPPRPILQRQDD. The segment covering 65 to 77 has biased composition (basic and acidic residues); sequence TPEKGFSDREPTR. Ser100 carries the phosphoserine modification. The interval 152 to 401 is TRAF-binding; that stretch reads ERDLIEQSML…AVDPGKGWEW (250 aa). A catalytic region spans residues 167-440; sequence AGRLNWWVSV…VKWIPLSSDA (274 aa). Residues 183 to 365 enclose the OTU domain; it reads LLPLATTGDG…QAHFSALVSM (183 aa). The interval 187-193 is regulatory loop; sequence ATTGDGN. Asp191 is a catalytic residue. Cys194 acts as the Nucleophile in catalysis. His358 serves as the catalytic Proton acceptor. Disordered stretches follow at residues 442-587 and 652-711; these read APLA…GGSK and IMNG…CQEP. Composition is skewed to basic and acidic residues over residues 456–471 and 488–500; these read DEPRSTPESGDSDKES and SKRDREKDKKRAD. Phosphoserine is present on residues Ser464, Ser467, and Ser471. The Nuclear localization signal motif lies at 483 to 498; that stretch reads RRKEKSKRDREKDKKR. Positions 531-543 are enriched in gly residues; sequence KPGGVGTGLGGSS. A compositionally biased stretch (basic and acidic residues) spans 665-675; it reads KKPEPDAREEQ. A Phosphothreonine modification is found at Thr729. The disordered stretch occupies residues 732-792; it reads RQCPPGRPYP…PEPDGWAGGL (61 aa). The A20-type zinc finger occupies 796–831; the sequence is PPTQTKCKQPNCSFYGHPETNNFCSCCYREELRRRE. The Zn(2+) site is built by Cys802, Cys807, Cys819, and Cys822.

It belongs to the peptidase C64 family. Interacts with ZAP70 in activated T cells, but not in resting T cells. Interacts with TRAF3. Interacts with TRAF6. Interacts with PARK7, leading to inhibit deubiquitinase activity. Interacts with EGFR, ITCH and NEDD4. Post-translationally, phosphorylated by EGFR. As to expression, widely expressed. Abundant in kidney, heart and fetal liver. Expressed differentially among B-cells at distinct developmental stages. Higher expression seen in primary immature B-cells as compared to the mature cells.

The protein resides in the cytoplasm. It localises to the nucleus. The catalysed reaction is Thiol-dependent hydrolysis of ester, thioester, amide, peptide and isopeptide bonds formed by the C-terminal Gly of ubiquitin (a 76-residue protein attached to proteins as an intracellular targeting signal).. With respect to regulation, deubiquitinase activity is inhibited following interaction with PARK7. In terms of biological role, negative regulator of the non-canonical NF-kappa-B pathway that acts by mediating deubiquitination of TRAF3, an inhibitor of the NF-kappa-B pathway, thereby acting as a negative regulator of B-cell responses. In response to non-canonical NF-kappa-B stimuli, deubiquitinates 'Lys-48'-linked polyubiquitin chains of TRAF3, preventing TRAF3 proteolysis and over-activation of non-canonical NF-kappa-B. Negatively regulates mucosal immunity against infections. Deubiquitinates ZAP70, and thereby regulates T cell receptor (TCR) signaling that leads to the activation of NF-kappa-B. Plays a role in T cell homeostasis and is required for normal T cell responses, including production of IFNG and IL2. Mediates deubiquitination of EGFR. Has deubiquitinating activity toward 'Lys-11', 'Lys-48' and 'Lys-63'-linked polyubiquitin chains. Has a much higher catalytic rate with 'Lys-11'-linked polyubiquitin chains (in vitro); however the physiological significance of these data are unsure. Hydrolyzes both linear and branched forms of polyubiquitin. Acts as a regulator of mTORC1 and mTORC2 assembly by mediating 'Lys-63'-linked deubiquitination of MLST8, thereby promoting assembly of the mTORC2 complex, while inibiting formation of the mTORC1 complex. The polypeptide is OTU domain-containing protein 7B (OTUD7B) (Homo sapiens (Human)).